The following is a 1118-amino-acid chain: Cytospin-A (1118 aa).

Disordered regions lie at residues 1–157 (MKKS…DGQI) and 198–221 (GGKELQEGPEEEEEEEEEEKPHVS). Polar residues-rich tracts occupy residues 57–102 (NPTS…TKET) and 112–123 (SRASANKKQSAA). Over residues 144–153 (SESRMSKSKS) the composition is skewed to basic and acidic residues. A compositionally biased stretch (acidic residues) spans 204-215 (EGPEEEEEEEEE). Residues 225–264 (AADVESTLILLQEQNQAIREELNLLKSENRMLKDRLNALG) adopt a coiled-coil conformation. The tract at residues 289 to 379 (AGSGQSDGGG…RRGSSGNASE (91 aa)) is disordered. Positions 343–363 (SSDDALDAPSGASSSSESECA) are enriched in low complexity. Coiled-coil stretches lie at residues 384-438 (CLTE…MDSL) and 475-796 (GRYM…RGRV). 3 disordered regions span residues 771–790 (QEKNEKLSKELEEVKSRKQD), 837–876 (FDSASQGPPSNGASVTPTVSAAPLPRTPLSPSPMKTPPAA), and 920–1001 (SAAS…ERKD). Positions 838–855 (DSASQGPPSNGASVTPTV) are enriched in polar residues. Residues 861-872 (PRTPLSPSPMKT) show a composition bias toward pro residues. The segment covering 930 to 945 (QRVSNMDSTKTISVSR) has biased composition (polar residues). The span at 946–956 (RSSEEMKRDMS) shows a compositional bias: basic and acidic residues. The span at 961–986 (ASSTSLMAMSAASAPLSLSSSSPTAS) shows a compositional bias: low complexity. One can recognise a Calponin-homology (CH) domain in the interval 1012–1117 (GSKRNALLKW…YVTAIYKYFE (106 aa)).

The protein belongs to the cytospin-A family. As to quaternary structure, may interact with both microtubules and actin cytoskeleton.

Its subcellular location is the cytoplasm. It is found in the cytoskeleton. It localises to the spindle. The protein localises to the cell junction. The protein resides in the gap junction. Its function is as follows. Involved in cytokinesis and spindle organization. May play a role in actin cytoskeleton organization and microtubule stabilization and hence required for proper cell adhesion and migration. This is Cytospin-A (specc1l) from Takifugu rubripes (Japanese pufferfish).